Consider the following 102-residue polypeptide: Large ribosomal subunit protein bL21 (102 aa).

Belongs to the bacterial ribosomal protein bL21 family. Part of the 50S ribosomal subunit. Contacts protein L20.

This protein binds to 23S rRNA in the presence of protein L20. The chain is Large ribosomal subunit protein bL21 from Campylobacter jejuni subsp. jejuni serotype O:6 (strain 81116 / NCTC 11828).